A 120-amino-acid polypeptide reads, in one-letter code: V-type proton ATPase subunit F (120 aa).

It belongs to the V-ATPase F subunit family. In terms of assembly, V-ATPase is a heteromultimeric enzyme composed of a peripheral catalytic V1 complex (components A to H) attached to an integral membrane V0 proton pore complex (components: a, c, c', c'', d, e, f and VOA1).

Its subcellular location is the vacuole membrane. Its function is as follows. Subunit of the V1 complex of vacuolar(H+)-ATPase (V-ATPase), a multisubunit enzyme composed of a peripheral complex (V1) that hydrolyzes ATP and a membrane integral complex (V0) that translocates protons. V-ATPase is responsible for acidifying and maintaining the pH of intracellular compartments. In Schizosaccharomyces pombe (strain 972 / ATCC 24843) (Fission yeast), this protein is V-type proton ATPase subunit F.